Reading from the N-terminus, the 314-residue chain is DNA-directed RNA polymerase subunit alpha (314 aa).

Residues 1-228 are alpha N-terminal domain (alpha-NTD); sequence MIEIEKPKIE…EHLNIFVGLT (228 aa). Positions 245-314 are alpha C-terminal domain (alpha-CTD); sequence KEKVLEMTIE…ELGLSLRKDD (70 aa).

Belongs to the RNA polymerase alpha chain family. As to quaternary structure, homodimer. The RNAP catalytic core consists of 2 alpha, 1 beta, 1 beta' and 1 omega subunit. When a sigma factor is associated with the core the holoenzyme is formed, which can initiate transcription.

The enzyme catalyses RNA(n) + a ribonucleoside 5'-triphosphate = RNA(n+1) + diphosphate. DNA-dependent RNA polymerase catalyzes the transcription of DNA into RNA using the four ribonucleoside triphosphates as substrates. This Geobacillus kaustophilus (strain HTA426) protein is DNA-directed RNA polymerase subunit alpha.